The sequence spans 234 residues: Ubiquinone biosynthesis O-methyltransferase (234 aa).

Residues arginine 40, glycine 59, aspartate 80, and methionine 123 each coordinate S-adenosyl-L-methionine.

The protein belongs to the methyltransferase superfamily. UbiG/COQ3 family.

The catalysed reaction is a 3-demethylubiquinol + S-adenosyl-L-methionine = a ubiquinol + S-adenosyl-L-homocysteine + H(+). It carries out the reaction a 3-(all-trans-polyprenyl)benzene-1,2-diol + S-adenosyl-L-methionine = a 2-methoxy-6-(all-trans-polyprenyl)phenol + S-adenosyl-L-homocysteine + H(+). Its pathway is cofactor biosynthesis; ubiquinone biosynthesis. In terms of biological role, O-methyltransferase that catalyzes the 2 O-methylation steps in the ubiquinone biosynthetic pathway. This Coxiella burnetii (strain Dugway 5J108-111) protein is Ubiquinone biosynthesis O-methyltransferase.